The sequence spans 358 residues: Protein-L-isoaspartate O-methyltransferase domain-containing protein 1 (358 aa).

A lipid anchor (N-myristoyl glycine) is attached at Gly2. Ser64 is an active-site residue. AdoMet binding motif stretches follow at residues 85 to 94, 160 to 164, and 181 to 191; these read LNLGSGTGYL, YDRIY, and LKVGGILVMPI. Residues 240–250 form a BC-box region; the sequence is VRNLQDLARIY. A disordered region spans residues 300–339; it reads PLDSEEDERMEDDNKEEEDKDHSEALKPEEPPRNLLREKI. Residues 302–318 are compositionally biased toward acidic residues; that stretch reads DSEEDERMEDDNKEEED. A compositionally biased stretch (basic and acidic residues) spans 319–339; that stretch reads KDHSEALKPEEPPRNLLREKI. The segment at 342–345 is CUL-box; sequence LPLP.

It belongs to the methyltransferase superfamily. L-isoaspartyl/D-aspartyl protein methyltransferase family. In terms of assembly, component of the probable ECS(PCMTD1) E3 ubiquitin-protein ligase complex, at least composed of CUL5, ELOB, ELOC, RBX2 and PCMTD1.

It localises to the cytoplasm. The protein localises to the membrane. Substrate recognition component of an ECS (Elongin BC-CUL5-SOCS-box protein) E3 ubiquitin ligase complex which mediates the ubiquitination and subsequent proteasomal degradation of target proteins. Specifically binds to the methyltransferase cofactor S-adenosylmethionine (AdoMet) via the N-terminal AdoMet binding motif, but does not display methyltransferase activity. May provide an alternate maintenance pathway for modified proteins by acting as a damage-specific E3 ubiquitin ligase adaptor protein. This Gallus gallus (Chicken) protein is Protein-L-isoaspartate O-methyltransferase domain-containing protein 1 (PCMTD1).